Consider the following 433-residue polypeptide: Chaperone SurA (433 aa).

A signal peptide spans 1 to 24 (MDGIKLLLSIIILYFYTYINCAIA). 2 PpiC domains span residues 173–274 (NTTF…KVHD) and 285–385 (ITEV…QLQN).

It localises to the periplasm. The catalysed reaction is [protein]-peptidylproline (omega=180) = [protein]-peptidylproline (omega=0). In terms of biological role, chaperone involved in the correct folding and assembly of outer membrane proteins. Recognizes specific patterns of aromatic residues and the orientation of their side chains, which are found more frequently in integral outer membrane proteins. May act in both early periplasmic and late outer membrane-associated steps of protein maturation. The chain is Chaperone SurA from Baumannia cicadellinicola subsp. Homalodisca coagulata.